We begin with the raw amino-acid sequence, 492 residues long: Cytoplasmic dynein 1 light intermediate chain 2 (492 aa).

61–68 (GEDGSGKT) serves as a coordination point for ATP. Disordered stretches follow at residues 187–206 (PEEG…SGSD), 371–423 (AKQP…KNNA), and 437–492 (LSKK…ENEA). At Ser-194 the chain carries Phosphoserine. Residues 371–381 (AKQPATPTRAS) show a composition bias toward polar residues. Residues Ser-383 and Ser-391 each carry the phosphoserine modification. Position 397 is an omega-N-methylarginine (Arg-397). The residue at position 441 (Thr-441) is a Phosphothreonine. 2 positions are modified to phosphoserine: Ser-443 and Ser-446. Polar residues predominate over residues 452–469 (VQSTAKKSGQKTVLSNVQ). The segment covering 471 to 480 (ELDRMTRKPD) has biased composition (basic and acidic residues). Positions 482–492 (MVTNSSTENEA) are enriched in polar residues.

The protein belongs to the dynein light intermediate chain family. As to quaternary structure, homodimer. The cytoplasmic dynein 1 complex consists of two catalytic heavy chains (HCs) and a number of non-catalytic subunits presented by intermediate chains (ICs), light intermediate chains (LICs) and light chains (LCs); the composition seems to vary in respect to the IC, LIC and LC composition. The heavy chain homodimer serves as a scaffold for the probable homodimeric assembly of the respective non-catalytic subunits. The ICs and LICs bind directly to the HC dimer and the LCs assemble on the IC dimer. Interacts with DYNC1H1; DYNC1LI1 and DYNC1LI2 bind mutually exclusive to DYNC1H.

The protein resides in the cytoplasm. Its subcellular location is the cytoskeleton. In terms of biological role, acts as one of several non-catalytic accessory components of the cytoplasmic dynein 1 complex that are thought to be involved in linking dynein to cargos and to adapter proteins that regulate dynein function. Cytoplasmic dynein 1 acts as a motor for the intracellular retrograde motility of vesicles and organelles along microtubules. May play a role in binding dynein to membranous organelles or chromosomes. This chain is Cytoplasmic dynein 1 light intermediate chain 2 (DYNC1LI2), found in Pongo abelii (Sumatran orangutan).